We begin with the raw amino-acid sequence, 140 residues long: 5-NmdU N-acetyltransferase (140 aa).

The 139-residue stretch at Ile2–Trp140 folds into the N-acetyltransferase domain.

The protein belongs to the acetyltransferase family.

The catalysed reaction is 5-aminomethyl-dUMP in DNA + acetyl-CoA = 5-acetylaminomethyl-dUMP in DNA + CoA + H(+). Acetylates 5-aminomethyl-2'-deoxyuridine (5-NmdU) to produce 5-acetylaminomethyl-2'-deoxyuridine (5-AcNmdU) on DNA as a step in the pathway leading to thymidine hypermodifications in the viral genome. As a final result of the pathway of hypermodification, 5-acetylaminomethyl-2'-deoxyuridine (5-AcNmdU) substitutes for a subset of thymidines in the viral DNA. These modifications probably prevent degradation of viral genome by the host restriction-modification antiviral defense system. The polypeptide is 5-NmdU N-acetyltransferase (Pseudomonas aeruginosa).